The chain runs to 157 residues: uncharacterized protein (157 aa).

The disordered stretch occupies residues 1–157 (MNRGPPLRSR…SFSFLVPSNS (157 aa)). Pro residues predominate over residues 8–31 (RSRPPSSPPPASAFPGPSPFPSPS). Residues 62-71 (RTSHPPRCPH) show a composition bias toward basic residues. Pro residues predominate over residues 76–95 (PSAPSPPFTPPHPLPTPTPS). Composition is skewed to low complexity over residues 96-117 (SSPR…SLAS) and 124-157 (SFSS…PSNS).

This is an uncharacterized protein from Vitis vinifera (Grape).